Consider the following 347-residue polypeptide: Phenylalanine--tRNA ligase alpha subunit (347 aa).

Glu268 provides a ligand contact to Mg(2+).

The protein belongs to the class-II aminoacyl-tRNA synthetase family. Phe-tRNA synthetase alpha subunit type 1 subfamily. Tetramer of two alpha and two beta subunits. Mg(2+) serves as cofactor.

The protein resides in the cytoplasm. It catalyses the reaction tRNA(Phe) + L-phenylalanine + ATP = L-phenylalanyl-tRNA(Phe) + AMP + diphosphate + H(+). This is Phenylalanine--tRNA ligase alpha subunit from Leptothrix cholodnii (strain ATCC 51168 / LMG 8142 / SP-6) (Leptothrix discophora (strain SP-6)).